Consider the following 88-residue polypeptide: uncharacterized protein (88 aa).

This is an uncharacterized protein from Vaccinia virus (strain Copenhagen) (VACV).